Reading from the N-terminus, the 84-residue chain is UPF0512 protein O (84 aa).

Belongs to the UPF0512 family.

This Dictyostelium discoideum (Social amoeba) protein is UPF0512 protein O.